Reading from the N-terminus, the 276-residue chain is 3-methyl-2-oxobutanoate hydroxymethyltransferase (276 aa).

Mg(2+) is bound by residues Asp-44 and Asp-83. 3-methyl-2-oxobutanoate is bound by residues 44-45 (DS), Asp-83, and Lys-112. Glu-114 contacts Mg(2+). Glu-180 acts as the Proton acceptor in catalysis. Residues 256–276 (PTEAQSSRMKPDELSRALNAE) are disordered.

This sequence belongs to the PanB family. In terms of assembly, homodecamer; pentamer of dimers. The cofactor is Mg(2+).

It is found in the cytoplasm. It carries out the reaction 3-methyl-2-oxobutanoate + (6R)-5,10-methylene-5,6,7,8-tetrahydrofolate + H2O = 2-dehydropantoate + (6S)-5,6,7,8-tetrahydrofolate. Its pathway is cofactor biosynthesis; (R)-pantothenate biosynthesis; (R)-pantoate from 3-methyl-2-oxobutanoate: step 1/2. Catalyzes the reversible reaction in which hydroxymethyl group from 5,10-methylenetetrahydrofolate is transferred onto alpha-ketoisovalerate to form ketopantoate. The protein is 3-methyl-2-oxobutanoate hydroxymethyltransferase of Gluconacetobacter diazotrophicus (strain ATCC 49037 / DSM 5601 / CCUG 37298 / CIP 103539 / LMG 7603 / PAl5).